The primary structure comprises 147 residues: Hemoglobin subunit epsilon (147 aa).

The Globin domain maps to 3 to 147; the sequence is HFTAEEKSTI…VATALAHKYH (145 aa). Phosphoserine is present on residues Ser-14 and Ser-51. Residues His-64 and His-93 each contribute to the heme b site.

The protein belongs to the globin family. Heterotetramer of two alpha chains and two epsilon chains in early embryonic hemoglobin Gower-2; two zeta chains and two epsilon chains in early embryonic hemoglobin Gower-1. As to expression, red blood cells.

The epsilon chain is a beta-type chain of early mammalian embryonic hemoglobin. The polypeptide is Hemoglobin subunit epsilon (HBE1) (Microcebus murinus (Gray mouse lemur)).